We begin with the raw amino-acid sequence, 565 residues long: Zinc finger protein 143 (565 aa).

7 consecutive C2H2-type zinc fingers follow at residues 230-254 (FRCDYEGCGKLYTTAHHLKVHERSH), 260-284 (YQCDHGSCRKAFATGYGLKSHVRTH), 290-314 (YRCSEENCTKSFKTSGDLQKHVRTH), 320-344 (FKCPFEGCGRSFTTSNIRKVHIRTH), 350-374 (YYCSEPGCGRAFASATNYKNHVRIH), 380-404 (YVCTVPGCDKRFTEYSSLYKHHVVH), and 410-433 (YNCNHCGKTYKQISTLAMHKRTAH).

The protein belongs to the GLI C2H2-type zinc-finger protein family.

The protein resides in the nucleus. Its function is as follows. Transcriptional activator. Activates the gene for selenocysteine tRNA (tRNAsec). Binds to the activator element (AE) motif of the selenocysteine tRNA gene promoter. The chain is Zinc finger protein 143 (znf143) from Xenopus laevis (African clawed frog).